The primary structure comprises 149 residues: Oligosaccharyltransferase complex subunit OSTC (149 aa).

The Cytoplasmic segment spans residues 1-32; it reads MESLYRVPFLVLECPNLKLKKPPWVHMPSAMT. Residues 33–53 form a helical membrane-spanning segment; the sequence is VYALVVVSYFLITGGIIYDVI. Topologically, residues 54-83 are extracellular; that stretch reads VEPPSVGSVTDEHGHQRPVAFLAYRVNGQY. Residues 84–104 traverse the membrane as a helical segment; sequence IMEGLASSFLFTMGGLGFIIL. The Cytoplasmic portion of the chain corresponds to 105 to 117; that stretch reads DRSNAPNIPKLNR. A helical transmembrane segment spans residues 118-138; it reads FLLLFIGFVCVLLSFFMARVF. Residues 139–149 are Extracellular-facing; sequence MRMKLPGYLMG.

This sequence belongs to the OSTC family. As to quaternary structure, component of STT3A-containing oligosaccharyl transferase (OST-A) complex. STT3A-containing complex assembly occurs through the formation of 3 subcomplexes. Subcomplex 1 contains RPN1 and TMEM258, subcomplex 2 contains the STT3A-specific subunits STT3A, DC2/OSTC, and KCP2 as well as the core subunit OST4, and subcomplex 3 contains RPN2, DAD1, and OST48. The OST-A complex can form stable complexes with the Sec61 complex or with both the Sec61 and TRAP complexes. Interacts with PSEN1 and NCSTN; indicative for an association with the gamma-secretase complex.

The protein localises to the endoplasmic reticulum. The protein resides in the membrane. Its pathway is protein modification; protein glycosylation. Subunit of STT3A-containing oligosaccharyl transferase (OST-A) complex that catalyzes the initial transfer of a defined glycan (Glc(3)Man(9)GlcNAc(2) in eukaryotes) from the lipid carrier dolichol-pyrophosphate to an asparagine residue within an Asn-X-Ser/Thr consensus motif in nascent polypeptide chains, the first step in protein N-glycosylation. N-glycosylation occurs cotranslationally and the complex associates with the Sec61 complex at the channel-forming translocon complex that mediates protein translocation across the endoplasmic reticulum (ER). Within the OST-A complex, acts as an adapter that anchors the OST-A complex to the Sec61 complex. May be involved in N-glycosylation of APP (amyloid-beta precursor protein). Can modulate gamma-secretase cleavage of APP by enhancing endoprotelysis of PSEN1. This is Oligosaccharyltransferase complex subunit OSTC from Bos taurus (Bovine).